The chain runs to 613 residues: Na(+)/H(+) antiporter NhaA 1 (613 aa).

Residues 1 to 23 are disordered; sequence MTEASARTIGPLPSRFSRDPKTP. A na(+)/H(+) antiporter NhaA region spans residues 1-408; it reads MTEASARTIG…DPARQDEARV (408 aa). The next 11 membrane-spanning stretches (helical) occupy residues 29 to 49, 81 to 101, 110 to 130, 138 to 158, 168 to 188, 191 to 211, 231 to 251, 300 to 320, 337 to 357, 377 to 397, and 408 to 428; these read AAAA…NSPW, GLMA…FVIG, AVPV…FLTF, QAWG…LAVI, IFLL…IALF, DDLK…LAMV, IALY…AVLI, AVGP…NAGV, WGIV…ATAL, GGAA…DVAI, and VGVL…FRIT. The 205-residue stretch at 409 to 613 folds into the Thioredoxin domain; sequence GVLIASVLAF…SLIRALEAGR (205 aa).

The protein in the N-terminal section; belongs to the NhaA Na(+)/H(+) (TC 2.A.33) antiporter family.

Its subcellular location is the cell membrane. The enzyme catalyses Na(+)(in) + 2 H(+)(out) = Na(+)(out) + 2 H(+)(in). Na(+)/H(+) antiporter that extrudes sodium in exchange for external protons. The chain is Na(+)/H(+) antiporter NhaA 1 from Mycobacterium sp. (strain KMS).